Reading from the N-terminus, the 428-residue chain is Adenylosuccinate synthetase (428 aa).

GTP-binding positions include 11-17 (GDEGKGK) and 39-41 (GHT). The active-site Proton acceptor is the aspartate 12. 2 residues coordinate Mg(2+): aspartate 12 and glycine 39. IMP contacts are provided by residues 12 to 15 (DEGK), 37 to 40 (NAGH), threonine 130, arginine 144, asparagine 226, threonine 241, and arginine 305. The Proton donor role is filled by histidine 40. 301–307 (VTTGRKR) is a substrate binding site. GTP is bound by residues arginine 307, 333–335 (KLD), and 415–417 (GTG).

The protein belongs to the adenylosuccinate synthetase family. Homodimer. It depends on Mg(2+) as a cofactor.

The protein localises to the cytoplasm. It catalyses the reaction IMP + L-aspartate + GTP = N(6)-(1,2-dicarboxyethyl)-AMP + GDP + phosphate + 2 H(+). Its pathway is purine metabolism; AMP biosynthesis via de novo pathway; AMP from IMP: step 1/2. Functionally, plays an important role in the de novo pathway and in the salvage pathway of purine nucleotide biosynthesis. Catalyzes the first committed step in the biosynthesis of AMP from IMP. The sequence is that of Adenylosuccinate synthetase from Candida albicans (strain SC5314 / ATCC MYA-2876) (Yeast).